An 879-amino-acid chain; its full sequence is Pentatricopeptide repeat-containing protein At1g71210, mitochondrial (879 aa).

A mitochondrion-targeting transit peptide spans 1 to 44 (MLRCWSVTVERSCEGMLLRRRILSLSASSFRNFTSGNNGDAIPF). 16 PPR repeats span residues 181–215 (SLRLCDALVVGYAVAGRTDIALQHFGNMRFRGLDL), 216–246 (DSFGYHVLLNALVEEKCFDSFDVIFDQISVR), 250–280 (CAVTHSILVKKFCKQGKLDEAEDYLRALLPN), 285–319 (CGSGLGILVDALCSKRKFQEATKLLDEIKLVGTVN), 320–355 (MDRAYNIWIRALIKAGFLNNPADFLQKISPLEGCEL), 356–390 (EVFRYNSMVFQLLKENNLDGVYDILTEMMVRGVSP), 391–425 (NKKTMNAALCFFCKAGFVDEALELYRSRSEIGFAP), 426–460 (TAMSYNYLIHTLCANESVEQAYDVLKGAIDRGHFL), 461–495 (GGKTFSTLTNALCWKGKPDMARELVIAAAERDLLP), 496–530 (KRIAGCKIISALCDVGKVEDALMINELFNKSGVDT), 531–565 (SFKMFTSLIYGSITLMRGDIAAKLIIRMQEKGYTP), 566–597 (TRSLYRNVIQCVCEMESGEKNFFTTLLKFQLS), 602–636 (KVQAYNLFIEGAGFAGKPKLARLVYDMMDRDGITP), 637–667 (TVASNILMLQSYLKNEKIADALHFFHDLREQ), 671–705 (KKRLYQVMIVGLCKANKLDDAMHFLEEMKGEGLQP), and 706–740 (SIECYEVNIQKLCNEEKYDEAVGLVNEFRKSGRRI).

Belongs to the PPR family. P subfamily.

Its subcellular location is the mitochondrion. The protein is Pentatricopeptide repeat-containing protein At1g71210, mitochondrial of Arabidopsis thaliana (Mouse-ear cress).